Reading from the N-terminus, the 295-residue chain is Ribosomal protein L11 methyltransferase (295 aa).

Positions 150, 171, 193, and 232 each coordinate S-adenosyl-L-methionine.

This sequence belongs to the methyltransferase superfamily. PrmA family.

Its subcellular location is the cytoplasm. It carries out the reaction L-lysyl-[protein] + 3 S-adenosyl-L-methionine = N(6),N(6),N(6)-trimethyl-L-lysyl-[protein] + 3 S-adenosyl-L-homocysteine + 3 H(+). Its function is as follows. Methylates ribosomal protein L11. The protein is Ribosomal protein L11 methyltransferase of Neisseria meningitidis serogroup B (strain ATCC BAA-335 / MC58).